The chain runs to 34 residues: Photosystem II reaction center protein Psb30 (34 aa).

A helical membrane pass occupies residues 6–26; that stretch reads IVAQLLSLALVTLSGPAVIFL.

The protein belongs to the Psb30/Ycf12 family. In terms of assembly, PSII is composed of 1 copy each of membrane proteins PsbA, PsbB, PsbC, PsbD, PsbE, PsbF, PsbH, PsbI, PsbJ, PsbK, PsbL, PsbM, PsbT, PsbX, PsbY, PsbZ, Psb30/Ycf12, peripheral proteins of the oxygen-evolving complex and a large number of cofactors. It forms dimeric complexes.

The protein localises to the plastid. The protein resides in the chloroplast thylakoid membrane. Functionally, a core subunit of photosystem II (PSII), probably helps stabilize the reaction center. The chain is Photosystem II reaction center protein Psb30 from Emiliania huxleyi (Coccolithophore).